A 126-amino-acid chain; its full sequence is KH homology domain-containing protein 1B (126 aa).

The region spanning 19-78 (PLVFDMEEDQEDYIFGPDDEYLHTLEVHSNTLIQLERWFSPTGQTRVTVVGPLKARLWVM) is the KH domain.

The protein belongs to the KHDC1 family.

The polypeptide is KH homology domain-containing protein 1B (Khdc1b) (Mus musculus (Mouse)).